The primary structure comprises 325 residues: Aminotransferase tasG (325 aa).

A substrate-binding site is contributed by glycine 35. Pyridoxal 5'-phosphate-binding positions include threonine 89 to tryptophan 90, asparagine 143, tyrosine 174, and serine 203 to alanine 205. Asparagine 143 is a binding site for substrate. At lysine 206 the chain carries N6-(pyridoxal phosphate)lysine. Arginine 214 contributes to the pyridoxal 5'-phosphate binding site.

The protein belongs to the class-I pyridoxal-phosphate-dependent aminotransferase family. Homodimer. The cofactor is pyridoxal 5'-phosphate.

It functions in the pathway secondary metabolite biosynthesis. Functionally, aminotransferase; part of the gene cluster that mediates the biosynthesis of the tetramic acids Sch210971 and Sch210972, potential anti-HIV fungal natural product that contain a decalin core. The PKS module of tasS together with the enoylreductase tasC catalyze the formation of the polyketide unit which is then conjugated to 4-hydroxyl-4-methyl glutamate (HMG) by the condensation domain of the tasS NRPS module. One unique structural feature of Sch210971 and Sch210972 is the tetramic acid motif proposed to be derived from the non-proteinogenic amino acid HMG, by a Dieckmann-type condensation catalyzed by the reductase domain of tasS. The aldolase tasA catalyzes the aldol condensation of 2 molecules of pyruvic acid to yield the intermediate 4-hydroxyl-4-methyl-2-oxoglutarate (HMOG), which can then be stereoselectively transaminated, may be by tasG, to form HMG. The Diels-Alderase tas3 then uses the Dieckmann product of tasS as substrate and catalyzes the Diels-Alder cycloaddition to form the decalin ring of Sch210971 and Sch210972. This is Aminotransferase tasG from Hapsidospora irregularis.